The following is a 222-amino-acid chain: Ribosomal RNA small subunit methyltransferase I (222 aa).

The protein belongs to the methyltransferase superfamily. RsmI family.

It localises to the cytoplasm. It carries out the reaction cytidine(1402) in 16S rRNA + S-adenosyl-L-methionine = 2'-O-methylcytidine(1402) in 16S rRNA + S-adenosyl-L-homocysteine + H(+). Its function is as follows. Catalyzes the 2'-O-methylation of the ribose of cytidine 1402 (C1402) in 16S rRNA. The protein is Ribosomal RNA small subunit methyltransferase I of Thermotoga maritima (strain ATCC 43589 / DSM 3109 / JCM 10099 / NBRC 100826 / MSB8).